The chain runs to 383 residues: Probable indole-3-pyruvate monooxygenase YUCCA10 (383 aa).

FAD is bound at residue 9–14 (GAGPAG). 177 to 182 (GGGNSG) contributes to the NADP(+) binding site.

It belongs to the FMO family. Requires FAD as cofactor.

The catalysed reaction is indole-3-pyruvate + NADPH + O2 + H(+) = (indol-3-yl)acetate + CO2 + NADP(+) + H2O. Its pathway is plant hormone metabolism; auxin biosynthesis. Involved in auxin biosynthesis. In Arabidopsis thaliana (Mouse-ear cress), this protein is Probable indole-3-pyruvate monooxygenase YUCCA10 (YUC10).